Here is a 1083-residue protein sequence, read N- to C-terminus: DNA primase (1083 aa).

The CHC2-type zinc finger occupies 1022 to 1061 (CLRYPHRGGRTAPRTFVSLRVDHHNRLCISLAQQCFATKC).

The protein belongs to the herpesviridae DNA primase family. Associates with the helicase and the primase-associated factor to form the helicase-primase factor.

The protein localises to the host nucleus. In terms of biological role, essential component of the helicase/primase complex. Unwinds the DNA at the replication forks and generates single-stranded DNA for both leading and lagging strand synthesis. The primase initiates primer synthesis and thereby produces large amount of short RNA primers on the lagging strand that the polymerase elongates using dNTPs. The chain is DNA primase from Varicella-zoster virus (strain Oka vaccine) (HHV-3).